A 371-amino-acid chain; its full sequence is Protease PrtS (371 aa).

Zn(2+) is bound at residue His169. Residue Glu170 is part of the active site. His173 and Glu193 together coordinate Zn(2+). Catalysis depends on His273, which acts as the Proton donor. The segment at 352-371 (KEEDKDKGKDEGKDKAETKV) is disordered.

Belongs to the peptidase M4 family. Zn(2+) is required as a cofactor.

The protein localises to the secreted. Inhibited by 8 mM 1,10-phenanthroline, but not by EDTA or PMSF. Its function is as follows. Metalloprotease involved in the inhibition of insect antibacterial peptides. Reduces the antibacterial activity of G.mellonella hemolymph by 50%. Reduces the antibacterial activity of cecropin A by 80% and completely inhibits cecropin B. In Photorhabdus sp. (strain Az29), this protein is Protease PrtS.